A 382-amino-acid polypeptide reads, in one-letter code: Alanine racemase 1 (382 aa).

Catalysis depends on Lys-39, which acts as the Proton acceptor; specific for D-alanine. N6-(pyridoxal phosphate)lysine is present on Lys-39. Arg-138 provides a ligand contact to substrate. The active-site Proton acceptor; specific for L-alanine is Tyr-265. Met-312 contributes to the substrate binding site.

Belongs to the alanine racemase family. The cofactor is pyridoxal 5'-phosphate.

The enzyme catalyses L-alanine = D-alanine. Its pathway is amino-acid biosynthesis; D-alanine biosynthesis; D-alanine from L-alanine: step 1/1. Catalyzes the interconversion of L-alanine and D-alanine. May also act on other amino acids. The sequence is that of Alanine racemase 1 (alr1) from Staphylococcus aureus (strain MRSA252).